We begin with the raw amino-acid sequence, 518 residues long: Protein PAC2 (518 aa).

Residues 23 to 67 enclose the CAP-Gly domain; the sequence is VIKPWPSVKAYGVEWDDHSRGKHSGTIDDIHYFDVQIPNSGSFLK. LRR repeat units lie at residues 153–174, 179–201, 204–227, 229–252, 255–276, 277–298, 299–319, and 324–345; these read NVKDLDLSLNLFTNINSLCEFI, NLESLNISQNKLLSGWDNLKEYD, HIKTLRLSSCGLSYKHIGKLLKSF, TLKMLDLSYNNLTSAGIQNFENEI, TLEELNISGNNLISFPLFPKNL, TLKGLNVSNNQISRAPSIAIYS, VESLDITDNKFKERSLIDDLN, and SLKNIHLSGNEFNYNGNYINVE.

Its subcellular location is the cytoplasm. It is found in the cytoskeleton. Its function is as follows. Required for viability in the absence of the kinesin-related CIN8 mitotic motor. Seems to be involved in the assembly of alpha-tubulin. The protein is Protein PAC2 (PAC2) of Saccharomyces cerevisiae (strain ATCC 204508 / S288c) (Baker's yeast).